Here is a 189-residue protein sequence, read N- to C-terminus: Ribosomal RNA large subunit methyltransferase E (189 aa).

Positions 45, 47, 64, 82, and 104 each coordinate S-adenosyl-L-methionine. K144 acts as the Proton acceptor in catalysis.

This sequence belongs to the class I-like SAM-binding methyltransferase superfamily. RNA methyltransferase RlmE family.

The protein resides in the cytoplasm. It catalyses the reaction uridine(2552) in 23S rRNA + S-adenosyl-L-methionine = 2'-O-methyluridine(2552) in 23S rRNA + S-adenosyl-L-homocysteine + H(+). Specifically methylates the uridine in position 2552 of 23S rRNA at the 2'-O position of the ribose in the fully assembled 50S ribosomal subunit. This chain is Ribosomal RNA large subunit methyltransferase E, found in Borreliella afzelii (strain PKo) (Borrelia afzelii).